The primary structure comprises 493 residues: Cysteine sulfinic acid decarboxylase (493 aa).

Residue Lys-305 is modified to N6-(pyridoxal phosphate)lysine.

The protein belongs to the group II decarboxylase family. Homodimer. It depends on pyridoxal 5'-phosphate as a cofactor. In terms of tissue distribution, expressed in kidney and liver not detected in lymphoid tissues and lung. Expressed in kidney, liver and brain. 7 and 4 times higher expression in kidney and liver than in brain, respectively. Low level of detection in skeletal muscle. Expressed in brain, olfactory bulb, liver, skeletal muscle and kidney with the highest expression in liver and lowest in skeletal muscle (at protein level).

It carries out the reaction L-aspartate + H(+) = beta-alanine + CO2. The catalysed reaction is 3-sulfino-L-alanine + H(+) = hypotaurine + CO2. It catalyses the reaction L-cysteate + H(+) = taurine + CO2. It functions in the pathway organosulfur biosynthesis; taurine biosynthesis; hypotaurine from L-cysteine: step 2/2. Activated by Mn(2+). Inhibited by bis-carboxymethyl-trithiocarbonate, ethylxanthogenacetic acid and 2,5-disulfoaniline. Not affected by Li(+) within 0.05-40 mM concentration range. Its function is as follows. Catalyzes the decarboxylation of L-aspartate, 3-sulfino-L-alanine (cysteine sulfinic acid), and L-cysteate to beta-alanine, hypotaurine and taurine, respectively. The preferred substrate is 3-sulfino-L-alanine. Does not exhibit any decarboxylation activity toward glutamate. This chain is Cysteine sulfinic acid decarboxylase, found in Mus musculus (Mouse).